Reading from the N-terminus, the 248-residue chain is MENFKGLQKSLYIWTDSADLDKRVQQLKSATGGDVALENVHRLSFSSYANSSFDLIVIECAQLTDSYVKLLHMLKPSGKLHLVSFIGPAASLLQEIKLSGFINCREDSPDALTAEKPGYETGSSARLSFAKKNASAVNVWKISGDDEELIDEEELLDEEDKQKPDPAGLRVCSTTGKRKACKNCSCGLAEELETEKQSQKANETAKSSCGNCYLGDAFRCSTCPYLGMPAFKPGEKVQLGDNLLKSDI.

An N-terminal SAM-like domain region spans residues Phe4–Phe129. The tract at residues Ala130 to Lys161 is linker. [2Fe-2S] cluster contacts are provided by Cys172, Cys181, Cys184, and Cys186. The interval Cys172–Cys186 is fe-S binding site A. Positions 209, 212, 220, and 223 each coordinate [4Fe-4S] cluster. 2 short sequence motifs (cx2C motif) span residues Cys209–Cys212 and Cys220–Cys223. Positions Cys209–Cys223 are fe-S binding site B.

This sequence belongs to the anamorsin family. In terms of assembly, monomer. The cofactor is [2Fe-2S] cluster. [4Fe-4S] cluster is required as a cofactor.

Its subcellular location is the cytoplasm. It localises to the mitochondrion intermembrane space. In terms of biological role, component of the cytosolic iron-sulfur (Fe-S) protein assembly (CIA) machinery. Required for the maturation of extramitochondrial Fe-S proteins. Part of an electron transfer chain functioning in an early step of cytosolic Fe-S biogenesis, facilitating the de novo assembly of a [4Fe-4S] cluster on the cytosolic Fe-S scaffold complex. Electrons are transferred from NADPH via a FAD- and FMN-containing diflavin oxidoreductase. Together with the diflavin oxidoreductase, also required for the assembly of the diferric tyrosyl radical cofactor of ribonucleotide reductase (RNR), probably by providing electrons for reduction during radical cofactor maturation in the catalytic small subunit. This is Anamorsin homolog from Drosophila yakuba (Fruit fly).